A 434-amino-acid chain; its full sequence is Alpha-enolase (434 aa).

Ser-40 provides a ligand contact to Mg(2+). Substrate is bound by residues His-158 and Glu-167. The active-site Proton donor is the Glu-210. Mg(2+) contacts are provided by Asp-245, Glu-293, and Asp-318. 2 residues coordinate substrate: Glu-293 and Asp-318. Lys-343 serves as the catalytic Proton acceptor. Substrate contacts are provided by residues 370–373 (SHRS) and Lys-394.

It belongs to the enolase family. In terms of assembly, homodimer. It depends on Mg(2+) as a cofactor.

It localises to the cytoplasm. The enzyme catalyses (2R)-2-phosphoglycerate = phosphoenolpyruvate + H2O. Its pathway is carbohydrate degradation; glycolysis; pyruvate from D-glyceraldehyde 3-phosphate: step 4/5. Functionally, both an enzyme and a lens structural protein. The protein is Alpha-enolase (ENO1) of Anas platyrhynchos (Mallard).